Reading from the N-terminus, the 801-residue chain is MWTTGRMSNAKSWLGLGTSLYFWALMDLTATVLSSTPMPEVELETLFSGRSQSHQRSKRSWVWNQFFVLEEYTGTDPLYVGKLHSDMDRGDGSIKYILSGEGAGIVFTIDDTTGDIHAIQRLDREERAQYTLRAQALDRRTGRPMEPESEFIIKIQDINDNEPKFLDGPYIATVPEMSPVGTSVIQVTATDADDPTYGNSARVVYSILQGQPYFSVDSKTGVIRTALMNMDREAKEYYEVIIQAKDMGGQLGGLAGTTTVNITLSDVNDNPPRFPQKHYQMSVLESAPISSTVGRVFAKDLDEGINAEMKYTIVDGDGADAFDINTDQNFQVGIITVKKPLSFESKKSYTLKVEGSNPHLEMRFLNLGPFQDTTTVHISVEDVDEPPVFEPGFYFVEVPEDVTIGTTIQIISAKDPDVTNNSIRYSIDRGSDPGRFFYVDITTGALMTARPLDREEFSWHNITVLAMEMNNPSQVGSVAVTIKVLDVNDNAPEFPRFYEAFICENAKAGQLIQTVSAVDQDDPHNGQHFYYSLAPEAANNPNFTVRDNQDNTARILTRRSGFRQQEQSVFYLPILIADSGQPVLSSTGTLTIQVCSCNDDGHVMSCSPEAYLLPVSLSRGALIAILACIFVLLVLVLLILSMRRHRKQPYIIDDDENIHENIVRYDDEGGGEEDTEAFDIAAMWNPREAQAGAAPKTRQDMLPEIESLSRYVPQTCAVSSTVHSYVLAKLYEADMDLWAPPFDSLQTYMFEGDGSVAGSLSSLQSATSDSEQSFDFLTDWGPRFRKLAELYGASEGPAPLW.

The N-terminal stretch at 1 to 34 is a signal peptide; sequence MWTTGRMSNAKSWLGLGTSLYFWALMDLTATVLS. The propeptide occupies 35–59; it reads STPMPEVELETLFSGRSQSHQRSKR. Topologically, residues 60-619 are extracellular; the sequence is SWVWNQFFVL…AYLLPVSLSR (560 aa). 5 Cadherin domains span residues 61-165, 166-274, 275-389, 390-494, and 494-610; these read WVWN…EPKF, LDGP…PPRF, PQKH…PPVF, EPGF…APEF, and FPRF…SPEA. N261 carries an N-linked (GlcNAc...) asparagine glycan. N420, N461, and N542 each carry an N-linked (GlcNAc...) asparagine glycan. The helical transmembrane segment at 620 to 640 threads the bilayer; it reads GALIAILACIFVLLVLVLLIL. Topologically, residues 641-801 are cytoplasmic; sequence SMRRHRKQPY…GASEGPAPLW (161 aa).

In terms of tissue distribution, expressed in brain. Highest level of expression in the retina. In embryo it is synthesized by the forebrain, anterior neural ridge, developing visual system, primitive external granular layer of the cerebellum and a subset of neural crest cells likely to develop into melanoblasts.

It is found in the cell membrane. In terms of biological role, cadherins are calcium-dependent cell adhesion proteins. They preferentially interact with themselves in a homophilic manner in connecting cells; cadherins may thus contribute to the sorting of heterogeneous cell types. The chain is Cadherin-20 (Cdh20) from Mus musculus (Mouse).